The primary structure comprises 398 residues: O-methyltransferase penC (398 aa).

Aspartate 263 contributes to the S-adenosyl-L-methionine binding site. Histidine 305 acts as the Proton acceptor in catalysis.

The protein belongs to the class I-like SAM-binding methyltransferase superfamily. Cation-independent O-methyltransferase family.

The protein operates within secondary metabolite biosynthesis. It functions in the pathway alkaloid biosynthesis. Its pathway is mycotoxin biosynthesis. Its function is as follows. O-methyltransferase; part of the gene cluster that mediates the biosynthesis of penigequinolones, potent insecticidal alkaloids that contain a highly modified 10-carbon prenyl group. The first stage is catalyzed by the nonribosomal peptide synthetase penN that condenses anthranilic acid and O-methyl-L-tyrosine to produce 4'-methoxycyclopeptin. 4'-methoxycyclopeptin is then converted to 4'-methoxydehydrocyclopeptin by the ketoglutarate-dependent dioxygenase penM through dehydrogenation to form a double bond between C-alpha and C-beta of the O-methyltyrosine side chain. PenM also converts its first product methoxydehydrocyclopeptin to 4'-methoxycyclopenin. The following conversion of 4'methoxycyclopenin into 4'-methoxyviridicatin is catalyzed by the cyclopenase penL. 4'-methoxyviridicatin is the precursor of quinolone natural products, and is further converted to quinolinone B. The prenyltransferase penI then catalyzes the canonical Friedel-Crafts alkylation of quinolinone B with dimethylallyl cation to yield dimethylallyl quinolone, which is subjected to FAD-dependent dehydrogenation by the FAD-linked oxidoreductase penH to yield conjugated aryl diene. The delta(3') double bond then serves as the site of the second alkylation with DMAPP catalyzed by the prenyltransferase penG to yield a carbenium ion intermediate, which can be attacked by H(2)O to yield a styrenyl quinolone containing a C3'-hydroxyprenyl chain, or undergo cyclization to yield yaequinolones J1 and J2. The conversion of the styrenyl quinolone into the tetrahydrofuran-containing yaequinolone C is performed by the FAD-dependent monooxygenase penE and involves epoxidation of the terminal C7'-C8' olefin, followed by epoxide ring opening initiated by the C3' hydroxyl group. The predicted cysteine hydrolase penJ acts as an epoxide hydrolase that enhances the rate of the 5-exo-tet cyclization step, increasing the yield of yaequinolone C. PenF catalyzes the cationic rearrangement of the epoxide formed by penE (before ring opening to produce yaequinolone C) into yaequinolone D. Finally, the short-chain dehydrogenase/reductase (SDR)-like reductase penD, catalyzes both the dehydration of yaequinolone D and the reduction of the resulting oxonium to yield penigequinolone. This Penicillium thymicola protein is O-methyltransferase penC.